The chain runs to 2290 residues: Autophagy-related protein 2 (2290 aa).

Residues 10-99 (WCKVMLQRYM…MCIEDLQLTF (90 aa)) enclose the Chorein N-terminal domain. The required for epg-6 binding stretch occupies residues 829 to 1549 (DSMMKSVSAD…PNRDHSAFVV (721 aa)). 4 disordered regions span residues 1678–1727 (IGSK…LGDL), 1805–1851 (DDLF…DLTG), 1898–1919 (SETE…PARN), and 1967–2003 (EHGN…ERNK). Low complexity predominate over residues 1681-1692 (KKTTPKTSVSSS). The segment covering 1714–1723 (RPSPVQPPTP) has biased composition (pro residues). Residues 1810-1830 (QSYSSSSSETESESSAPQSSQ) are compositionally biased toward low complexity. Positions 1972–2011 (LDSIDNEDDNEKQKIEEEMEEDEKEEEEERNKEIQEAVER) form a coiled coil. A compositionally biased stretch (acidic residues) spans 1988 to 1999 (EEMEEDEKEEEE).

This sequence belongs to the ATG2 family. In terms of assembly, interacts with epg-6; the interaction is direct.

Its subcellular location is the preautophagosomal structure membrane. The protein localises to the lipid droplet. The protein resides in the endoplasmic reticulum membrane. It is found in the cytoplasm. It catalyses the reaction a 1,2-diacyl-sn-glycero-3-phospho-L-serine(in) = a 1,2-diacyl-sn-glycero-3-phospho-L-serine(out). It carries out the reaction a 1,2-diacyl-sn-glycero-3-phosphoethanolamine(in) = a 1,2-diacyl-sn-glycero-3-phosphoethanolamine(out). Functionally, lipid transfer protein involved in autophagosome assembly and in the distribution of atg-9 and atg-13 during the autophagy-mediated degradation of protein aggregates. Tethers the edge of the isolation membrane (IM) to the endoplasmic reticulum (ER) and mediates direct lipid transfer from ER to IM for IM expansion. Binds to the ER exit site (ERES), which is the membrane source for autophagosome formation, and extracts phospholipids from the membrane source to the IM for membrane expansion. Involved in autophagy-mediated degradation of ribosomal RNA and ribosomal proteins in lysosomes, which is essential for maintaining nucleotide homeostasis. The protein is Autophagy-related protein 2 of Caenorhabditis elegans.